A 485-amino-acid polypeptide reads, in one-letter code: Arginine/agmatine antiporter (485 aa).

12 helical membrane-spanning segments follow: residues 12 to 34, 38 to 60, 89 to 111, 126 to 148, 155 to 177, 211 to 230, 243 to 265, 291 to 313, 363 to 385, 400 to 422, 427 to 446, and 461 to 483; these read GTIA…SLPQ, ATAG…FFIA, IGFT…YAVI, GGNT…FIVL, SIIN…ILTA, TMLV…VMSG, VLGF…GSLF, VLMN…IIVA, WNTM…AAFL, IKAP…LIYA, YLFM…IDAG, and IVGM…TGRI.

Belongs to the amino acid-polyamine-organocation (APC) superfamily. Basic amino acid/polyamine antiporter (APA) (TC 2.A.3.2) family.

Its subcellular location is the cell inner membrane. Functionally, catalyzes the exchange of L-arginine for agmatine. The arginine uptake by the bacterium in the macrophage may be a virulence factor against the host innate immune response. The chain is Arginine/agmatine antiporter (aaxC) from Chlamydia pneumoniae (Chlamydophila pneumoniae).